Here is a 317-residue protein sequence, read N- to C-terminus: UDP-3-O-acylglucosamine N-acyltransferase (317 aa).

The Proton acceptor role is filled by H229.

It belongs to the transferase hexapeptide repeat family. LpxD subfamily. Homotrimer.

It catalyses the reaction a UDP-3-O-[(3R)-3-hydroxyacyl]-alpha-D-glucosamine + a (3R)-hydroxyacyl-[ACP] = a UDP-2-N,3-O-bis[(3R)-3-hydroxyacyl]-alpha-D-glucosamine + holo-[ACP] + H(+). It functions in the pathway bacterial outer membrane biogenesis; LPS lipid A biosynthesis. Functionally, catalyzes the N-acylation of UDP-3-O-acylglucosamine using 3-hydroxyacyl-ACP as the acyl donor. Is involved in the biosynthesis of lipid A, a phosphorylated glycolipid that anchors the lipopolysaccharide to the outer membrane of the cell. This Campylobacter curvus (strain 525.92) protein is UDP-3-O-acylglucosamine N-acyltransferase.